The chain runs to 326 residues: 3-isopropylmalate dehydrogenase (326 aa).

4 residues coordinate substrate: Arg-81, Arg-91, Arg-112, and Asp-198. Residues Asp-198, Asp-222, and Asp-226 each coordinate Mg(2+). 255–267 is an NAD(+) binding site; the sequence is GAAFDIAGKGIAN.

The protein belongs to the isocitrate and isopropylmalate dehydrogenases family. In terms of assembly, homotetramer. Requires Mg(2+) as cofactor. The cofactor is Mn(2+).

It is found in the cytoplasm. The enzyme catalyses (2R,3S)-3-isopropylmalate + NAD(+) = 4-methyl-2-oxopentanoate + CO2 + NADH. It participates in amino-acid biosynthesis; L-leucine biosynthesis; L-leucine from 3-methyl-2-oxobutanoate: step 3/4. In terms of biological role, catalyzes the oxidation of 3-carboxy-2-hydroxy-4-methylpentanoate (3-isopropylmalate) to 3-carboxy-4-methyl-2-oxopentanoate. The product decarboxylates to 4-methyl-2 oxopentanoate. This Archaeoglobus fulgidus (strain ATCC 49558 / DSM 4304 / JCM 9628 / NBRC 100126 / VC-16) protein is 3-isopropylmalate dehydrogenase (leuB).